The primary structure comprises 206 residues: High frequency lysogenization protein HflD homolog (206 aa).

The protein belongs to the HflD family.

Its subcellular location is the cytoplasm. It is found in the cell inner membrane. The chain is High frequency lysogenization protein HflD homolog from Pseudomonas paraeruginosa (strain DSM 24068 / PA7) (Pseudomonas aeruginosa (strain PA7)).